We begin with the raw amino-acid sequence, 244 residues long: Flavin-dependent thymidylate synthase (244 aa).

The ThyX domain maps to V2–K207. FAD is bound by residues S56, R80–R82, and Q88. Residues Q77 to R80, Q88 to R92, and R146 contribute to the dUMP site. The ThyX motif signature appears at R80–S90. FAD contacts are provided by residues N162 to R164 and H168. DUMP is bound at residue R173. Residue R173 is the Involved in ionization of N3 of dUMP, leading to its activation of the active site.

This sequence belongs to the thymidylate synthase ThyX family. As to quaternary structure, homotetramer. FAD serves as cofactor.

The enzyme catalyses dUMP + (6R)-5,10-methylene-5,6,7,8-tetrahydrofolate + NADPH + H(+) = dTMP + (6S)-5,6,7,8-tetrahydrofolate + NADP(+). Its pathway is pyrimidine metabolism; dTTP biosynthesis. In terms of biological role, catalyzes the reductive methylation of 2'-deoxyuridine-5'-monophosphate (dUMP) to 2'-deoxythymidine-5'-monophosphate (dTMP) while utilizing 5,10-methylenetetrahydrofolate (mTHF) as the methyl donor, and NADPH and FADH(2) as the reductant. The polypeptide is Flavin-dependent thymidylate synthase (Pyrococcus furiosus (strain ATCC 43587 / DSM 3638 / JCM 8422 / Vc1)).